The chain runs to 544 residues: (E,E)-germacrene B synthase (544 aa).

Positions 296, 300, and 449 each coordinate Mg(2+). The short motif at 296 to 300 is the DDXXD motif element; that stretch reads DDTFD.

This sequence belongs to the terpene synthase family. Requires Mg(2+) as cofactor. The cofactor is Mn(2+).

Its subcellular location is the cytoplasm. It carries out the reaction (2E,6E)-farnesyl diphosphate = (1E,4E)-germacrene B + diphosphate. The protein operates within secondary metabolite biosynthesis; terpenoid biosynthesis. In terms of biological role, involved in the biosynthesis of germacrene B. This Solanum habrochaites (Wild tomato) protein is (E,E)-germacrene B synthase (SSTLH1).